The sequence spans 170 residues: Large ribosomal subunit protein uL16 (170 aa).

Belongs to the universal ribosomal protein uL16 family.

This Methanospirillum hungatei JF-1 (strain ATCC 27890 / DSM 864 / NBRC 100397 / JF-1) protein is Large ribosomal subunit protein uL16.